The primary structure comprises 365 residues: tRNA N6-adenosine threonylcarbamoyltransferase (365 aa).

Fe cation contacts are provided by histidine 119 and histidine 123. Substrate contacts are provided by residues 141–145 (LVSGG), aspartate 174, glycine 187, and asparagine 288. Residue aspartate 316 participates in Fe cation binding.

The protein belongs to the KAE1 / TsaD family. Fe(2+) serves as cofactor.

It is found in the cytoplasm. It catalyses the reaction L-threonylcarbamoyladenylate + adenosine(37) in tRNA = N(6)-L-threonylcarbamoyladenosine(37) in tRNA + AMP + H(+). Required for the formation of a threonylcarbamoyl group on adenosine at position 37 (t(6)A37) in tRNAs that read codons beginning with adenine. Is involved in the transfer of the threonylcarbamoyl moiety of threonylcarbamoyl-AMP (TC-AMP) to the N6 group of A37, together with TsaE and TsaB. TsaD likely plays a direct catalytic role in this reaction. The polypeptide is tRNA N6-adenosine threonylcarbamoyltransferase (Rhizobium leguminosarum bv. trifolii (strain WSM2304)).